The sequence spans 65 residues: U12-theraphotoxin-Cg1a (65 aa).

The first 21 residues, 1–21 (MKTSVLLFMLGLTFLFDGLAA), serve as a signal peptide directing secretion. Residues 22 to 29 (INLQEGER) constitute a propeptide that is removed on maturation. Intrachain disulfides connect C31–C45, C38–C50, and C44–C57.

It belongs to the neurotoxin 10 (Hwtx-1) family. 31 (Jztx-15) subfamily. As to expression, expressed by the venom gland.

Its subcellular location is the secreted. Probable ion channel inhibitor. This chain is U12-theraphotoxin-Cg1a, found in Chilobrachys guangxiensis (Chinese earth tiger tarantula).